The chain runs to 1423 residues: uncharacterized protein (1423 aa).

The N-terminal stretch at 1-28 is a signal peptide; that stretch reads MTSSVRLAFLATLLLLLPLEAQIQQANS. At 29 to 1321 the chain is on the extracellular side; sequence ANVNQNVGQQ…RSREKQNFLT (1293 aa). N-linked (GlcNAc...) asparagine glycosylation is found at N94, N306, N355, N483, N666, and N903. The region spanning 184–347 is the NIDO domain; that stretch reads SFFGQSASKA…GRYMFRVDDV (164 aa). An AMOP domain is found at 638 to 818; the sequence is VKKKSLEMCH…FRCQMFYWRR (181 aa). The chain crosses the membrane as a helical span at residues 1322–1342; the sequence is WLAIIGGIFGVLVFVILIFLC. Residues 1343 to 1423 are Cytoplasmic-facing; it reads CWIVKQKKKG…EDLHGLKTSV (81 aa). The tract at residues 1364–1401 is disordered; it reads SRSSMTGSRGGKKYPIHESEPLNEKRFDADTYRDDDFY. The segment covering 1378–1401 has biased composition (basic and acidic residues); it reads PIHESEPLNEKRFDADTYRDDDFY.

The protein localises to the membrane. This is an uncharacterized protein from Caenorhabditis elegans.